The primary structure comprises 294 residues: Glyceraldehyde-3-phosphate dehydrogenase (294 aa).

NAD(+)-binding residues include Asp-19, Arg-63, and Thr-105. Residues 134–136 (SCT) and Thr-165 contribute to the D-glyceraldehyde 3-phosphate site. Cys-135 acts as the Nucleophile in catalysis. Lys-177 is modified (N6-acetyllysine). Residues 194–195 (TG) and Arg-217 contribute to the D-glyceraldehyde 3-phosphate site. N6-acetyllysine is present on Lys-234.

This sequence belongs to the glyceraldehyde-3-phosphate dehydrogenase family. As to quaternary structure, homotetramer.

It localises to the cytoplasm. It carries out the reaction D-glyceraldehyde 3-phosphate + phosphate + NAD(+) = (2R)-3-phospho-glyceroyl phosphate + NADH + H(+). Its pathway is carbohydrate degradation; glycolysis; pyruvate from D-glyceraldehyde 3-phosphate: step 1/5. Catalyzes the oxidative phosphorylation of glyceraldehyde 3-phosphate (G3P) to 1,3-bisphosphoglycerate (BPG) using the cofactor NAD. The first reaction step involves the formation of a hemiacetal intermediate between G3P and a cysteine residue, and this hemiacetal intermediate is then oxidized to a thioester, with concomitant reduction of NAD to NADH. The reduced NADH is then exchanged with the second NAD, and the thioester is attacked by a nucleophilic inorganic phosphate to produce BPG. The protein is Glyceraldehyde-3-phosphate dehydrogenase (gap) of Pseudescherichia vulneris (Escherichia vulneris).